The following is a 345-amino-acid chain: Phenylalanine--tRNA ligase alpha subunit (345 aa).

Residue Glu266 coordinates Mg(2+).

Belongs to the class-II aminoacyl-tRNA synthetase family. Phe-tRNA synthetase alpha subunit type 1 subfamily. In terms of assembly, tetramer of two alpha and two beta subunits. Requires Mg(2+) as cofactor.

It localises to the cytoplasm. The catalysed reaction is tRNA(Phe) + L-phenylalanine + ATP = L-phenylalanyl-tRNA(Phe) + AMP + diphosphate + H(+). This is Phenylalanine--tRNA ligase alpha subunit from Burkholderia lata (strain ATCC 17760 / DSM 23089 / LMG 22485 / NCIMB 9086 / R18194 / 383).